The following is a 569-amino-acid chain: Ribosome-inactivating protein SNAI' (569 aa).

The signal sequence occupies residues 1-28; the sequence is MKVVATILYLVVLAICGLGIHGAHPTHS. N-linked (GlcNAc...) asparagine glycosylation occurs at asparagine 40. The active site involves glutamate 201. 3 disulfides stabilise this stretch: cysteine 286/cysteine 311, cysteine 328/cysteine 347, and cysteine 369/cysteine 381. Ricin B-type lectin domains lie at 315–435 and 437–565; these read EEVT…WIVG and VEPL…WIAS. One copy of the 1-alpha repeat lies at 325-365; the sequence is DGFCAEVKNGDEKDGTPVQLSSCGEQSNQQWTFSTDGTIQS. One copy of the 1-beta repeat lies at 366–401; it reads LGKCLTTSSSVMIYNCKVVPPESTKWVVSIDGTITN. The stretch at 404–436 is one 1-gamma repeat; sequence SGLVLTAPKAAEGTLVSLEKNVHAARQGWIVGN. Residues 448-488 form a 2-alpha repeat; it reads EQMCLETNPGNNDVSLGDCSVKSASKVDQKWALYGDGTIRV. Cystine bridges form between cysteine 451–cysteine 466 and cysteine 495–cysteine 512. The stretch at 492–530 is one 2-beta repeat; it reads RSLCVTSEGKSSNEPIIILKCLGWANQRWVFNTDGTISN. Residues 533 to 566 form a 2-gamma repeat; it reads SKLVMHVDQNDVPLRKIILSHPSGTSNQQWIAST.

This sequence in the N-terminal section; belongs to the ribosome-inactivating protein family. Type 2 RIP subfamily. Disulfide-linked dimer of A and B chains.

It carries out the reaction Endohydrolysis of the N-glycosidic bond at one specific adenosine on the 28S rRNA.. The A chain is responsible for inhibiting protein synthesis through the catalytic inactivation of 60S ribosomal subunits by removing adenine from position 4,324 of 28S rRNA. The B chain binds to cell receptors and probably facilitates the entry into the cell of the A chain; B chains are also responsible for cell agglutination (lectin activity). Agglutination is inhibited by Neu5Ac(alpha2,6)lactose, and N-linked glycoproteins such as fetuin and orosomucoid. This is Ribosome-inactivating protein SNAI' from Sambucus nigra (European elder).